We begin with the raw amino-acid sequence, 354 residues long: CCN family member 3 (354 aa).

Residues 1–21 (MSLFLRKRCLCLGFLLFHLLS) form the signal peptide. The IGFBP N-terminal domain maps to 25–99 (ASLRCPSRCP…NNQTGICMVP (75 aa)). Cystine bridges form between Cys29–Cys55, Cys33–Cys57, Cys37–Cys58, Cys44–Cys61, Cys69–Cys83, and Cys75–Cys96. Asn91 carries an N-linked (GlcNAc...) asparagine glycan. The VWFC domain occupies 102–168 (DNCVFDGVIY…GECCEKWTCG (67 aa)). The 46-residue stretch at 202-247 (NCIEQTTEWSACSKSCGMGVSTRVTNRNRQCEMVKQTRLCIVRPCE) folds into the TSP type-1 domain. Cys241 is lipidated: S-palmitoyl cysteine. Cystine bridges form between Cys261-Cys298, Cys278-Cys312, Cys289-Cys328, Cys292-Cys330, and Cys297-Cys334. The 75-residue stretch at 261 to 335 (CLRTKKSLKA…GTCTCYSNCP (75 aa)) folds into the CTCK domain. The N-linked (GlcNAc...) asparagine glycan is linked to Asn277.

The protein belongs to the CCN family. In terms of assembly, interacts with FBLN1. Interacts (via CTCK domain) with NOTCH1 (via the EGF-like repeat region). Interacts with GJA1/CX43. Interacts with ITGA5:ITGB1, ITGAV:ITGB3 and ITGAV:ITGB5. Interacts with ZDHHC22; the interaction may lead to CCN3 palmitoylation. Post-translationally, may be palmitoylated on Cys-241, which is important for extracellular secretion. Expressed in large vessels including the ascending aorta, carotid arteries, and the thoracic aorta, in medium-sized vessels such as coronary arteries and small pulmonary veins and also in small vessels. In addition, also found to be present in the heart (at protein level). Expressed in astrocytes (at protein level). Detected in brain, bone, lung and muscle tissues. Expressed in skin, expression highly increases 5 days post-wounding, peaking on the 7th day to decline after 9 days. Expressed in pancreatic ducts and beta-cell islets. Expressed in the brain, in arcuate nucleus ESR1/KISS1 neurons, during lactation (at protein level).

Its subcellular location is the secreted. It localises to the cytoplasm. The protein resides in the cell junction. The protein localises to the gap junction. In terms of biological role, immediate-early protein playing a role in various cellular processes including proliferation, adhesion, migration, differentiation and survival. Acts by binding to integrins or membrane receptors such as NOTCH1. Essential regulator of hematopoietic stem and progenitor cell function. Inhibits myogenic differentiation through the activation of Notch-signaling pathway. Inhibits vascular smooth muscle cells proliferation by increasing expression of cell-cycle regulators such as CDKN2B or CDKN1A independently of TGFB1 signaling. Ligand of integrins ITGAV:ITGB3 and ITGA5:ITGB1, acts directly upon endothelial cells to stimulate pro-angiogenic activities and induces angiogenesis. In endothelial cells, supports cell adhesion, induces directed cell migration (chemotaxis) and promotes cell survival. Also plays a role in cutaneous wound healing acting as integrin receptor ligand. Supports skin fibroblast adhesion through ITGA5:ITGB1 and ITGA6:ITGB1 and induces fibroblast chemotaxis through ITGAV:ITGB5. Seems to enhance bFGF-induced DNA synthesis in fibroblasts. Involved in bone regeneration as a negative regulator. Enhances the articular chondrocytic phenotype, whereas it repressed the one representing endochondral ossification. Impairs pancreatic beta-cell function, inhibits beta-cell proliferation and insulin secretion. Plays a role as negative regulator of endothelial pro-inflammatory activation reducing monocyte adhesion, its anti-inflammatory effects occur secondary to the inhibition of NF-kappaB signaling pathway. Contributes to the control and coordination of inflammatory processes in atherosclerosis. Attenuates inflammatory pain through regulation of IL1B- and TNF-induced MMP9, MMP2 and CCL2 expression. Inhibits MMP9 expression through ITGB1 engagement. Brain osteoanabolic hormone. During lactation, maintains the maternal skeleton and viability of offspring. In this context, may act on osteochondral skeletal stem cells. In Mus musculus (Mouse), this protein is CCN family member 3 (Ccn3).